A 367-amino-acid polypeptide reads, in one-letter code: 3-isopropylmalate dehydrogenase (367 aa).

75–88 (GPKWDGIERSKRPE) is an NAD(+) binding site. Substrate is bound by residues Arg-95, Arg-105, Arg-133, and Asp-230. 3 residues coordinate Mg(2+): Asp-230, Asp-254, and Asp-258. Residue 288–300 (GSAPDIAGQDIAN) participates in NAD(+) binding.

Belongs to the isocitrate and isopropylmalate dehydrogenases family. LeuB type 1 subfamily. Homodimer. Mg(2+) serves as cofactor. Requires Mn(2+) as cofactor.

Its subcellular location is the cytoplasm. It catalyses the reaction (2R,3S)-3-isopropylmalate + NAD(+) = 4-methyl-2-oxopentanoate + CO2 + NADH. The protein operates within amino-acid biosynthesis; L-leucine biosynthesis; L-leucine from 3-methyl-2-oxobutanoate: step 3/4. Its function is as follows. Catalyzes the oxidation of 3-carboxy-2-hydroxy-4-methylpentanoate (3-isopropylmalate) to 3-carboxy-4-methyl-2-oxopentanoate. The product decarboxylates to 4-methyl-2 oxopentanoate. This chain is 3-isopropylmalate dehydrogenase, found in Psychrobacter cryohalolentis (strain ATCC BAA-1226 / DSM 17306 / VKM B-2378 / K5).